The primary structure comprises 333 residues: Lipoyl synthase (333 aa).

The interval 1-29 (MTDSASGASAVANIATPSNEPYDATRKQK) is disordered. [4Fe-4S] cluster is bound by residues cysteine 80, cysteine 85, cysteine 91, cysteine 106, cysteine 110, cysteine 113, and serine 320. The Radical SAM core domain occupies 91 to 309 (CFGKGTATFM…EEKAYEMGFT (219 aa)).

This sequence belongs to the radical SAM superfamily. Lipoyl synthase family. [4Fe-4S] cluster is required as a cofactor.

It localises to the cytoplasm. It catalyses the reaction [[Fe-S] cluster scaffold protein carrying a second [4Fe-4S](2+) cluster] + N(6)-octanoyl-L-lysyl-[protein] + 2 oxidized [2Fe-2S]-[ferredoxin] + 2 S-adenosyl-L-methionine + 4 H(+) = [[Fe-S] cluster scaffold protein] + N(6)-[(R)-dihydrolipoyl]-L-lysyl-[protein] + 4 Fe(3+) + 2 hydrogen sulfide + 2 5'-deoxyadenosine + 2 L-methionine + 2 reduced [2Fe-2S]-[ferredoxin]. Its pathway is protein modification; protein lipoylation via endogenous pathway; protein N(6)-(lipoyl)lysine from octanoyl-[acyl-carrier-protein]: step 2/2. Catalyzes the radical-mediated insertion of two sulfur atoms into the C-6 and C-8 positions of the octanoyl moiety bound to the lipoyl domains of lipoate-dependent enzymes, thereby converting the octanoylated domains into lipoylated derivatives. This is Lipoyl synthase from Ralstonia nicotianae (strain ATCC BAA-1114 / GMI1000) (Ralstonia solanacearum).